A 1399-amino-acid chain; its full sequence is DNA-directed RNA polymerase subunit beta' (1399 aa).

4 residues coordinate Zn(2+): C70, C72, C85, and C88. Residues D460, D462, and D464 each contribute to the Mg(2+) site. C814, C888, C895, and C898 together coordinate Zn(2+).

Belongs to the RNA polymerase beta' chain family. As to quaternary structure, the RNAP catalytic core consists of 2 alpha, 1 beta, 1 beta' and 1 omega subunit. When a sigma factor is associated with the core the holoenzyme is formed, which can initiate transcription. Mg(2+) serves as cofactor. Zn(2+) is required as a cofactor.

The enzyme catalyses RNA(n) + a ribonucleoside 5'-triphosphate = RNA(n+1) + diphosphate. Functionally, DNA-dependent RNA polymerase catalyzes the transcription of DNA into RNA using the four ribonucleoside triphosphates as substrates. This Pseudomonas putida (strain W619) protein is DNA-directed RNA polymerase subunit beta'.